The sequence spans 266 residues: Isoprenyl transferase (266 aa).

Residue Asp-36 is part of the active site. Asp-36 is a binding site for Mg(2+). Substrate is bound by residues 37–40, Trp-41, Arg-49, His-53, and 81–83; these read GNGR and STE. The active-site Proton acceptor is Asn-84. Substrate-binding positions include Trp-85, Arg-87, Arg-204, and 210–212; that span reads RIS. Mg(2+) is bound at residue Glu-223.

This sequence belongs to the UPP synthase family. As to quaternary structure, homodimer. The cofactor is Mg(2+).

Its function is as follows. Catalyzes the condensation of isopentenyl diphosphate (IPP) with allylic pyrophosphates generating different type of terpenoids. In Prochlorococcus marinus (strain SARG / CCMP1375 / SS120), this protein is Isoprenyl transferase.